Consider the following 399-residue polypeptide: MRYSLDSYLISVYIRLTQRKSDYMCTNPIIPIVQYKVPVKSSLDVVDWSKFRSNFKANLFFFEKNVVRRAVSNVDEAFRFTEQLKQVSYLSTFDLDGYHQVKQFSFPLPCRKCSECLQKRSKDLAVQATMEARSHEENSVLILTYDNDHLGDNILDYDHIRVFQKRLRRYVDYHYGKKIKFLTVGEYGDKKGRMHWHMIVFGWKPKSEEQLEPYLGGKYRTDVRYRSRKLKELWKFGYVDVDEATDGNIFYVARYVQKKFVVGCDLDSSKSSSRREKKTASQALGLDYFFSYLRQFLKTKRIVLNGFRYGFPRYFKDLLRKLVSEDSEFDTEYYNALRKRLLSVCSYSMVNKYFTYLECLVEVLPVLNFHDLYQRALRYMDQSILKPHASDHDGEYNTT.

Active-site O-(5'-phospho-DNA)-tyrosine intermediate residues include Tyr-251 and Tyr-255.

The protein belongs to the microviridae Rep protein family.

It catalyses the reaction ATP + (deoxyribonucleotide)n-3'-hydroxyl + 5'-phospho-(deoxyribonucleotide)m = (deoxyribonucleotide)n+m + AMP + diphosphate.. Its function is as follows. Plays an essential role in viral DNA replication. Binds the origin of replication and cleaves the dsDNA replicative form I (RFI) and becomes covalently bound to it via phosphotyrosine bond, generating the dsDNA replicative form II (RFII). In turn, viral DNA replication initiates at the 3'-OH of the cleavage site. After one round of rolling circle synthesis, protein ORF4 is linked to the newly synthesized ssDNA and joins the ends of the displaced strand to generate a circular single-stranded molecule ready to be packed into a virion. The chain is Replication-associated protein ORF4 from Chlamydia psittaci (Chlamydophila psittaci).